The primary structure comprises 348 residues: Selenide, water dikinase (348 aa).

Cys17 is a catalytic residue. ATP is bound by residues Lys20 and Arg47–Asp49. Residue Asp50 participates in Mg(2+) binding. ATP-binding positions include Asp67, Asp90, and Gly138–Thr140. Asp90 serves as a coordination point for Mg(2+). Asp226 serves as a coordination point for Mg(2+).

The protein belongs to the selenophosphate synthase 1 family. Class I subfamily. Homodimer. Mg(2+) is required as a cofactor.

The catalysed reaction is hydrogenselenide + ATP + H2O = selenophosphate + AMP + phosphate + 2 H(+). Its function is as follows. Synthesizes selenophosphate from selenide and ATP. This is Selenide, water dikinase from Pelobacter propionicus (strain DSM 2379 / NBRC 103807 / OttBd1).